The primary structure comprises 151 residues: Ribosomal RNA large subunit methyltransferase H (151 aa).

S-adenosyl-L-methionine is bound by residues Ala101 and 119-124; that span reads LSEMTF.

Belongs to the RNA methyltransferase RlmH family. In terms of assembly, homodimer.

It localises to the cytoplasm. It catalyses the reaction pseudouridine(1915) in 23S rRNA + S-adenosyl-L-methionine = N(3)-methylpseudouridine(1915) in 23S rRNA + S-adenosyl-L-homocysteine + H(+). Functionally, specifically methylates the pseudouridine at position 1915 (m3Psi1915) in 23S rRNA. This is Ribosomal RNA large subunit methyltransferase H from Helicobacter pylori (strain G27).